A 130-amino-acid chain; its full sequence is Large ribosomal subunit protein eL22 (130 aa).

This sequence belongs to the eukaryotic ribosomal protein eL22 family.

The chain is Large ribosomal subunit protein eL22 (rpl-22) from Caenorhabditis elegans.